Here is a 1003-residue protein sequence, read N- to C-terminus: MADRVLVIGSGGREHALAWKLAQSPHVKQVFVAPGNAGTANSGKISNSAVSVSNHAALAQFCRDQEIRLVVVGPEVPLAAGIVDDLTAAGVRCFGPTARAAQLESSKSFTKSFLDRHGIPTARWKSFTDPKAACSFINSANFPALVVKASGLAAGKGVIVASNKEEACKAVNDIMQDKTFGTAGETVVVEELLEGEEVSCLCFTDGVTIAPMPPAQDHKRLKDGDEGPNTGGMGAYSPAPQISKDLLLKIRETVLQKTLDGMRKEGIPYLGVLYAGLMLTKDGPKVLEFNCRFGDPECQVILPLLKSDLYEVMQAVINKKLSSSMPIWYEDSAAVTVVMASEGYPGTYPKGLEITGLSKAKELGLEVFHAGTALKDGKVVTNGGRVLTVTAIKEDLMTALQEANKGVAAINFKGSIYRKDIGYRAIAFLSQSRGLTYKNSGVDIAAGNILVQKIKPLAAATSRSGCNAELGGFAGLFDLKAAGYKDPILVSGTDGVGTKLKIAQVCKKHDTIGQDLVAMCVNDILAQGAEPLFFLDYFACGKLDVEVAQGVIAGIAEACQKAGCALLGGETAEMPGMYPPGEYDLAGFAVGAVERGQMLPQLERIADGDVVIGVASSGVHSNGYSLVRRIVEKSSLDFSSQVGVSGDQTLGDLLLTPTKIYSKTLLPVLRSGHVKAYAHITGGGLLENIPRVLPDSFGVVLDALSWKIPEIFCWLHKEGNLSEEEMARTFNCGIGAVLVVQKELAQQVLKDVQKHEAAWLIGKVVPLQKGSAHVKVHNLLQALQANRSLSVHSHIQGKIQTNKVKVAVLISGTGTNLEALINSTKKPTSFAEIVLVVSNKAGVEGLRKAERAGIPTRVIDHKQYGSRTEFDSAVDRVLEEFSVELICLAGFMRILSGPFVKKWEGKILNIHPSLLPSFKGANAHKLVLEAGVRVTGCTVHFVAEEVDAGAIIFQEAVPVKIGDTVETLSERVKEAEHRAFPAALQLVASGAVQVGEAGKICWK.

In terms of domain architecture, ATP-grasp spans 111 to 318 (KSFLDRHGIP…LYEVMQAVIN (208 aa)). Residues 190–193 (EELL), Glu197, Arg220, and Asn229 contribute to the ATP site. A disordered region spans residues 214–235 (PAQDHKRLKDGDEGPNTGGMGA). Residues 216–225 (QDHKRLKDGD) show a composition bias toward basic and acidic residues. Mg(2+) contacts are provided by Glu288 and Asn290. An AIRS domain region spans residues 434–805 (GLTYKNSGVD…QGKIQTNKVK (372 aa)). The interval 806–1003 (VAVLISGTGT…VGEAGKICWK (198 aa)) is GART domain. 814–816 (GTN) is a binding site for N(1)-(5-phospho-beta-D-ribosyl)glycinamide. Residues Arg867, 892 to 895 (MRIL), and Asn909 each bind (6R)-10-formyltetrahydrofolate. His911 acts as the Proton donor in catalysis. Residue 943-947 (AEEVD) coordinates (6R)-10-formyltetrahydrofolate. 973 to 976 (KEAE) provides a ligand contact to N(1)-(5-phospho-beta-D-ribosyl)glycinamide.

The protein in the N-terminal section; belongs to the GARS family. In the central section; belongs to the AIR synthase family. It in the C-terminal section; belongs to the GART family. In terms of assembly, homodimer. The cofactor is Mg(2+). It depends on Mn(2+) as a cofactor.

It carries out the reaction 5-phospho-beta-D-ribosylamine + glycine + ATP = N(1)-(5-phospho-beta-D-ribosyl)glycinamide + ADP + phosphate + H(+). It catalyses the reaction 2-formamido-N(1)-(5-O-phospho-beta-D-ribosyl)acetamidine + ATP = 5-amino-1-(5-phospho-beta-D-ribosyl)imidazole + ADP + phosphate + H(+). The enzyme catalyses N(1)-(5-phospho-beta-D-ribosyl)glycinamide + (6R)-10-formyltetrahydrofolate = N(2)-formyl-N(1)-(5-phospho-beta-D-ribosyl)glycinamide + (6S)-5,6,7,8-tetrahydrofolate + H(+). It functions in the pathway purine metabolism; IMP biosynthesis via de novo pathway; 5-amino-1-(5-phospho-D-ribosyl)imidazole from N(2)-formyl-N(1)-(5-phospho-D-ribosyl)glycinamide: step 2/2. It participates in purine metabolism; IMP biosynthesis via de novo pathway; N(1)-(5-phospho-D-ribosyl)glycinamide from 5-phospho-alpha-D-ribose 1-diphosphate: step 2/2. The protein operates within purine metabolism; IMP biosynthesis via de novo pathway; N(2)-formyl-N(1)-(5-phospho-D-ribosyl)glycinamide from N(1)-(5-phospho-D-ribosyl)glycinamide (10-formyl THF route): step 1/1. In terms of biological role, trifunctional enzyme that catalyzes three distinct reactions as part of the 'de novo' inosine monophosphate biosynthetic pathway. This is Trifunctional purine biosynthetic protein adenosine-3 (GART) from Gallus gallus (Chicken).